The sequence spans 481 residues: Autolysin (481 aa).

The region spanning 7-142 (KNEFIERLKT…LQDDNMLMIS (136 aa)) is the Peptidase C51 domain. Residues 198–323 (SNPKGIVIHN…NEFTSTSCPH (126 aa)) form the N-acetylmuramoyl-L-alanine amidase domain. The SH3b domain occupies 398–466 (EESARFTNGN…YLPIRTWNGS (69 aa)).

The protein belongs to the N-acetylmuramoyl-L-alanine amidase 2 family.

It is found in the secreted. It catalyses the reaction Hydrolyzes the link between N-acetylmuramoyl residues and L-amino acid residues in certain cell-wall glycopeptides.. In terms of biological role, autolysins are involved in some important biological processes such as cell separation, cell-wall turnover, competence for genetic transformation, formation of the flagella and sporulation. Autolysin strictly depends on the presence of choline-containing cell walls for activity. This is Autolysin (lytA) from Staphylococcus aureus.